A 218-amino-acid polypeptide reads, in one-letter code: MDLINIALDGPAAAGKSTIARQVASKLSMIYVDTGAMYRAITYKYLQNDKPEDFKTLVNQTTLELTYDKSKGQRILLDNQDVTDFLRENDVTQNVSYVASKEPVRTFAVEKQKDLAAKKGIVMDGRDIGTVVLPDAELKVFMIASVEERAERRQKENEQRGIPSTLSQLKKEIEERDHYDMNRDISPLKKADDAVTVDTTGKTIEEVTEEIMTLVNNI.

10-18 (GPAAAGKST) provides a ligand contact to ATP.

It belongs to the cytidylate kinase family. Type 1 subfamily.

It localises to the cytoplasm. The catalysed reaction is CMP + ATP = CDP + ADP. It carries out the reaction dCMP + ATP = dCDP + ADP. This is Cytidylate kinase from Staphylococcus haemolyticus (strain JCSC1435).